We begin with the raw amino-acid sequence, 268 residues long: MRRIDFRFAELRANGRKALIPFITAGDPSLEATVPVMHALVRAGADVIELGVPFSDPMADGPTIQRSSERALGRGAGLAYVLEAVHEFRREDAATPVVLMGYLNPIEIHGTRRFAEAAVAAGVDGLLLVDLPPEEADETRAIFTEVGLALIALASPTTSEQRLDMLCSTAQGYLYYVSFAGVTGASNLLDTHAASDRLRQLRQRAGAPVVAGFGIKDAASAAAMAVDADGVVVGSALVAALAEADDVRSARERAEAFLAPLRQALDQA.

Residues Glu49 and Asp60 each act as proton acceptor in the active site.

Belongs to the TrpA family. As to quaternary structure, tetramer of two alpha and two beta chains.

It carries out the reaction (1S,2R)-1-C-(indol-3-yl)glycerol 3-phosphate + L-serine = D-glyceraldehyde 3-phosphate + L-tryptophan + H2O. It functions in the pathway amino-acid biosynthesis; L-tryptophan biosynthesis; L-tryptophan from chorismate: step 5/5. Its function is as follows. The alpha subunit is responsible for the aldol cleavage of indoleglycerol phosphate to indole and glyceraldehyde 3-phosphate. In Xanthomonas oryzae pv. oryzae (strain MAFF 311018), this protein is Tryptophan synthase alpha chain.